Here is a 366-residue protein sequence, read N- to C-terminus: Putative amino-acid transporter MJ1196 (366 aa).

11 helical membrane passes run 14-34, 37-57, 87-107, 111-131, 141-161, 173-193, 205-225, 247-267, 291-311, 314-334, and 346-366; these read ITSIVGGGIFVLSPLTYLLFG, IIWGWALLIFVSLIMASPFAY, ILWLSGVFALSGVVSFFEIVF, FNVSYVGLCLIVILTALILGG, IFGILTITIILYIVFSNGIKI, ILTIYFGLWTATGWEGITMPL, GLLVGTFIIGVLYLLFSLTIV, FLLAGMLLIISSCAFSVLFTL, IPYYGVILNTLLVIILLIFDA, LVDMSMFSTLIAYFLLYLAVF, and LISMLITGLLILFRVYNFIIL.

Belongs to the amino acid-polyamine-organocation (APC) superfamily.

The protein localises to the cell membrane. In Methanocaldococcus jannaschii (strain ATCC 43067 / DSM 2661 / JAL-1 / JCM 10045 / NBRC 100440) (Methanococcus jannaschii), this protein is Putative amino-acid transporter MJ1196.